Here is a 576-residue protein sequence, read N- to C-terminus: Nuclear receptor subfamily 1 group D member 2 (576 aa).

A required for phosphorylation by CSNK1E and cytoplasmic localization region spans residues 1 to 60 (MELNAGGVIAYISSSSSASSPASCHSEGSENSFQSSSSSVPSSPNSSNCDANGNPKNADI). Residues 1 to 99 (MELNAGGVIA…HSGMTKFSGM (99 aa)) form a modulating region. Over residues 13-47 (SSSSSASSPASCHSEGSENSFQSSSSSVPSSPNSS) the composition is skewed to low complexity. The interval 13-90 (SSSSSASSPA…TSAPGMTKSH (78 aa)) is disordered. The residue at position 46 (Ser46) is a Phosphoserine; by GSK3-beta. The segment at residues 100–176 (VLLCKVCGDV…VGMSRDAVRF (77 aa)) is a DNA-binding region (nuclear receptor). NR C4-type zinc fingers lie at residues 103-123 (CKVC…CEGC) and 140-164 (CLKN…FKKC). An N6-acetyllysine; by KAT5 mark is found at Lys162 and Lys163. Disordered stretches follow at residues 215–246 (QHDQ…SDFA) and 263–282 (LYNQ…QRGE). 2 stretches are compositionally biased toward basic and acidic residues: residues 227–237 (LRPKSQLEQEN) and 263–272 (LYNQEHRENS). 2 disulfides stabilise this stretch: Cys334/Cys340 and Cys371/Cys381. An NR LBD domain is found at 366–576 (RNSYLCNTGG…EELLAFKVHP (211 aa)). Positions 381 and 565 each coordinate heme. Positions 394-576 (SGHEIWEEFS…EELLAFKVHP (183 aa)) are interaction with ZNHIT1.

Belongs to the nuclear hormone receptor family. NR1 subfamily. As to quaternary structure, binds DNA as a monomer or a homodimer. Interacts with NCOA5 coactivator, leading to a strong increase of transcription of target genes. Interacts (via N-terminus) with KAT5. Interacts (via C-terminus) with HDAC1. Interacts with ZNHIT1. Interacts with SIAH2. In terms of processing, deacetylated by HDAC1. Acetylation and deacetylation regulate its transcriptional regulatory activity. Post-translationally, under more reducing intracellular redox conditions, Cys-381 is in its heme-bound state, which is optimal for recruitment of the NCOR1/HDAC3 corepressor complex and repression of target genes. When subjected to oxidative stress conditions, Cys-381 undergoes oxidation to form a disulfide bridge with Cys-371, also triggering a ligand switch that results in release of bound heme and derepression of target genes. Ubiquitinated by SIAH2; leading to its proteasomal degradation. In terms of processing, phosphorylated by CSNK1E; phosphorylation enhances its cytoplasmic localization. As to expression, ubiquitous. Expressed abundantly in skeletal muscle and brown adipose tissue. Expressed during skeletal muscle myogenesis.

Its subcellular location is the nucleus. The protein localises to the cytoplasm. The heme-bound form can bind gaseous signaling molecules such as CO and nitric oxide (NO) and NO can reverse its transcriptional repressor activity. Functionally, transcriptional repressor which coordinates circadian rhythm and metabolic pathways in a heme-dependent manner. Integral component of the complex transcription machinery that governs circadian rhythmicity and forms a critical negative limb of the circadian clock by directly repressing the expression of core clock components BMAL1 and CLOCK. Also regulates genes involved in metabolic functions, including lipid metabolism and the inflammatory response. Acts as a receptor for heme which stimulates its interaction with the NCOR1/HDAC3 corepressor complex, enhancing transcriptional repression. Recognizes two classes of DNA response elements within the promoter of its target genes and can bind to DNA as either monomers or homodimers, depending on the nature of the response element. Binds as a monomer to a response element composed of the consensus half-site motif 5'-[A/G]GGTCA-3' preceded by an A/T-rich 5' sequence (RevRE), or as a homodimer to a direct repeat of the core motif spaced by two nuclegotides (RevDR-2). Acts as a potent competitive repressor of ROR alpha (RORA) function and also negatively regulates the expression of NR1D1. Regulates lipid and energy homeostasis in the skeletal muscle via repression of genes involved in lipid metabolism and myogenesis including: CD36, FABP3, FABP4, UCP3, SCD1 and MSTN. Regulates hepatic lipid metabolism via the repression of APOC3. Represses gene expression at a distance in macrophages by inhibiting the transcription of enhancer-derived RNAs (eRNAs). In addition to its activity as a repressor, can also act as a transcriptional activator. Acts as a transcriptional activator of the sterol regulatory element-binding protein 1 (SREBF1) and the inflammatory mediator interleukin-6 (IL6) in the skeletal muscle. Plays a role in the regulation of circadian sleep/wake cycle; essential for maintaining wakefulness during the dark phase or active period. Key regulator of skeletal muscle mitochondrial function; negatively regulates the skeletal muscle expression of core clock genes and genes involved in mitochondrial biogenesis, fatty acid beta-oxidation and lipid metabolism. May play a role in the circadian control of neutrophilic inflammation in the lung. The sequence is that of Nuclear receptor subfamily 1 group D member 2 from Mus musculus (Mouse).